The primary structure comprises 183 residues: Large ribosomal subunit protein uL6 (183 aa).

This sequence belongs to the universal ribosomal protein uL6 family. In terms of assembly, part of the 50S ribosomal subunit.

This protein binds to the 23S rRNA, and is important in its secondary structure. It is located near the subunit interface in the base of the L7/L12 stalk, and near the tRNA binding site of the peptidyltransferase center. The protein is Large ribosomal subunit protein uL6 of Methanococcus aeolicus (strain ATCC BAA-1280 / DSM 17508 / OCM 812 / Nankai-3).